The following is a 171-amino-acid chain: Endoribonuclease YbeY (171 aa).

Zn(2+) contacts are provided by His-126, His-130, and His-136.

This sequence belongs to the endoribonuclease YbeY family. Zn(2+) is required as a cofactor.

Its subcellular location is the cytoplasm. In terms of biological role, single strand-specific metallo-endoribonuclease involved in late-stage 70S ribosome quality control and in maturation of the 3' terminus of the 16S rRNA. The polypeptide is Endoribonuclease YbeY (Rhizobium etli (strain ATCC 51251 / DSM 11541 / JCM 21823 / NBRC 15573 / CFN 42)).